The following is a 343-amino-acid chain: uncharacterized protein (343 aa).

This is an uncharacterized protein from Saccharolobus islandicus (Sulfolobus islandicus).